A 155-amino-acid polypeptide reads, in one-letter code: Protein E6 (155 aa).

Zinc fingers lie at residues 33–69 (CVYCKKELTSLELYRFACIELKLVYRNNWPYAVCRVC) and 106–142 (CYRCQCPLTPEEKQLHCEHKRRFHYIAYAWTGSCLQC).

This sequence belongs to the papillomaviridae E6 protein family. In terms of assembly, forms homodimers. Interacts with ubiquitin-protein ligase UBE3A/E6-AP; this interaction stimulates UBE3A ubiquitin activity. Interacts with host TP53 and EP300; this interaction inhibits TP53 activity.

The protein localises to the host cytoplasm. Its subcellular location is the host nucleus. Functionally, plays a major role in the induction and maintenance of cellular transformation. E6 associates with host UBE3A/E6-AP ubiquitin-protein ligase and modulates its activity. Sequesters tumor suppressor TP53 in the host cytoplasm and modulates its activity by interacting with host EP300 that results in the reduction of TP53 acetylation and activation. In turn, apoptosis induced by DNA damage is inhibited. E6 also protects host keratinocytes from apoptosis by mediating the degradation of host BAK1. May also inhibit host immune response. The chain is Protein E6 from Homo sapiens (Human).